The following is a 1581-amino-acid chain: Mediator of RNA polymerase II transcription subunit 1 (1581 aa).

An interaction with the Mediator complex and THRA region spans residues 1–670 (MKAQGETEES…YGSSPLERQN (670 aa)). The segment at 16-590 (MSSLLERLHA…SIKDRHESVG (575 aa)) is interaction with ESR1. Interaction with the Mediator complex regions lie at residues 108-212 (FYVE…GYLT) and 215-390 (SGGH…SLQG). The tract at residues 405–644 (PLILNLIRHQ…MAGNTKNHPM (240 aa)) is interaction with THRA. An interaction with VDR region spans residues 542–789 (PASSPGYGMT…TDILSDIAEE (248 aa)). Serine 588 is subject to Phosphoserine. Residues 604–608 (LTSLL) carry the LXXLL motif 1 motif. 4 disordered regions span residues 609-705 (QITG…HQTE), 792-820 (KLPS…QSTL), 874-893 (SQSG…GDND), and 948-1566 (EHHS…DFMI). The segment covering 622–632 (PTPPHHTPPPV) has biased composition (pro residues). The tract at residues 622–701 (PTPPHHTPPP…SSRLPPEKPK (80 aa)) is interaction with PPARGC1A and THRA. The short motif at 645–649 (LMNLL) is the LXXLL motif 2 element. Residues 655–675 (QDFSTLYGSSPLERQNSSSGS) are compositionally biased toward polar residues. Positions 656–1066 (DFSTLYGSSP…TPPIPKITIQ (411 aa)) are interaction with ESR1. Position 664 is a phosphoserine (serine 664). An interaction with GATA1 region spans residues 681-715 (CSGSNKTKKKKSSRLPPEKPKHQTEDDFQRELFSM). A compositionally biased stretch (basic and acidic residues) spans 696 to 705 (PPEKPKHQTE). Serine 795 carries the post-translational modification Phosphoserine. A Phosphothreonine modification is found at threonine 805. The span at 808–820 (RDSSSSGHSQSTL) shows a compositional bias: polar residues. An Integrase domain-binding motif (IBM) motif is present at residues 875-902 (QSGFGEEYFDESSQSGDNDDFKGFASQA). A phosphoserine mark is found at serine 887 and serine 953. Residues 963–974 (LGKEKTQKRVKE) show a composition bias toward basic and acidic residues. At threonine 1032 the chain carries Phosphothreonine; by MAPK1 or MAPK3. Positions 1034–1045 (PTSTGGSKSPGS) are enriched in low complexity. Threonine 1051 and threonine 1057 each carry phosphothreonine. Composition is skewed to low complexity over residues 1078–1094 (SSHS…SSGS) and 1101–1156 (SSSS…PGSS). The residue at position 1156 (serine 1156) is a Phosphoserine. The span at 1162 to 1195 (GLSSGSSSTKMKPQGKPSSLMNPSLSKPNISPSH) shows a compositional bias: polar residues. At lysine 1177 the chain carries N6-acetyllysine. Position 1207 is a phosphoserine (serine 1207). Phosphothreonine is present on threonine 1215. 2 stretches are compositionally biased toward low complexity: residues 1218-1227 (SSKAKSPISS) and 1234-1293 (MSGT…SKGK). Position 1223 is a phosphoserine (serine 1223). An interaction with TP53 region spans residues 1249 to 1421 (LGSSGSLSQK…KPGESSGEGL (173 aa)). Serine 1302 carries the post-translational modification Phosphoserine. Residues 1330–1345 (GVSTNSSSHPMSSKHN) are compositionally biased toward polar residues. At serine 1347 the chain carries Phosphoserine. The segment covering 1352-1364 (QGKREKSDKDKSK) has biased composition (basic and acidic residues). A phosphoserine mark is found at serine 1403 and serine 1433. Composition is skewed to polar residues over residues 1425 to 1440 (MASS…SGST) and 1448 to 1482 (PSHS…SPSS). Phosphothreonine is present on threonine 1440. Phosphothreonine; by MAPK1 or MAPK3 is present on threonine 1457. Phosphoserine is present on residues serine 1463, serine 1465, serine 1479, serine 1481, and serine 1482. Over residues 1496 to 1505 (KHKKHKKEKK) the composition is skewed to basic residues. The segment covering 1506–1522 (KVKDKDRDRDRDKDRDK) has biased composition (basic and acidic residues). Position 1529 is an N6-acetyllysine (lysine 1529). Over residues 1533 to 1552 (WSKSPISSDQSLSMTSNTIL) the composition is skewed to polar residues.

Belongs to the Mediator complex subunit 1 family. In terms of assembly, component of the Mediator complex, which is composed of MED1, MED4, MED6, MED7, MED8, MED9, MED10, MED11, MED12, MED13, MED13L, MED14, MED15, MED16, MED17, MED18, MED19, MED20, MED21, MED22, MED23, MED24, MED25, MED26, MED27, MED29, MED30, MED31, CCNC, CDK8 and CDC2L6/CDK11. The MED12, MED13, CCNC and CDK8 subunits form a distinct module termed the CDK8 module. Mediator containing the CDK8 module is less active than Mediator lacking this module in supporting transcriptional activation. Individual preparations of the Mediator complex lacking one or more distinct subunits have been variously termed ARC, CRSP, DRIP, PC2, SMCC and TRAP. This subunit specifically interacts with a number of nuclear receptors in a ligand-dependent fashion including AR, ESR1, ESR2, PPARA, PPARG, RORA, RXRA, RXRG, THRA, THRB and VDR. Interacts with CTNNB1, GABPA, GLI3, PPARGC1A and TP53. Interacts with YWHAH. Interacts with CLOCK; this interaction requires the presence of THRAP3. Interacts with GATA1 and CCAR1. Interacts with NR4A3. Interacts (via IBM motif) with PSIP1 (via IBD domain); phosphorylation increases its affinity for PSIP1. Interacts with USP22. In terms of processing, phosphorylated by MAPK1 or MAPK3 during G2/M phase which may enhance protein stability and promote entry into the nucleolus. Phosphorylation increases its interaction with PSIP1. In terms of tissue distribution, ubiquitously expressed.

It is found in the nucleus. Functionally, component of the Mediator complex, a coactivator involved in the regulated transcription of nearly all RNA polymerase II-dependent genes. Mediator functions as a bridge to convey information from gene-specific regulatory proteins to the basal RNA polymerase II transcription machinery. Mediator is recruited to promoters by direct interactions with regulatory proteins and serves as a scaffold for the assembly of a functional preinitiation complex with RNA polymerase II and the general transcription factors. Acts as a coactivator for GATA1-mediated transcriptional activation during erythroid differentiation of K562 erythroleukemia cells. The polypeptide is Mediator of RNA polymerase II transcription subunit 1 (MED1) (Homo sapiens (Human)).